Here is a 406-residue protein sequence, read N- to C-terminus: Argininosuccinate synthase (406 aa).

9 to 17 (AYSGGLDTS) contacts ATP. An L-citrulline-binding site is contributed by Tyr-86. Gly-116 contacts ATP. 3 residues coordinate L-aspartate: Thr-118, Asn-122, and Asp-123. Residue Asn-122 participates in L-citrulline binding. The L-citrulline site is built by Arg-126, Ser-174, Ser-183, Glu-259, and Tyr-271.

Belongs to the argininosuccinate synthase family. Type 1 subfamily. In terms of assembly, homotetramer.

The protein resides in the cytoplasm. It catalyses the reaction L-citrulline + L-aspartate + ATP = 2-(N(omega)-L-arginino)succinate + AMP + diphosphate + H(+). It functions in the pathway amino-acid biosynthesis; L-arginine biosynthesis; L-arginine from L-ornithine and carbamoyl phosphate: step 2/3. The chain is Argininosuccinate synthase from Geobacillus thermodenitrificans (strain NG80-2).